Consider the following 202-residue polypeptide: uncharacterized protein (202 aa).

In terms of domain architecture, Smr spans 116–196 (LDLHGMTCSE…GKGTTWVLLK (81 aa)).

This is an uncharacterized protein from Treponema pallidum (strain Nichols).